The sequence spans 427 residues: Arginine biosynthesis bifunctional protein ArgJ (427 aa).

T174, K200, T211, E291, N422, and T427 together coordinate substrate. The active-site Nucleophile is the T211.

This sequence belongs to the ArgJ family. Heterotetramer of two alpha and two beta chains.

Its subcellular location is the cytoplasm. It carries out the reaction N(2)-acetyl-L-ornithine + L-glutamate = N-acetyl-L-glutamate + L-ornithine. The enzyme catalyses L-glutamate + acetyl-CoA = N-acetyl-L-glutamate + CoA + H(+). It participates in amino-acid biosynthesis; L-arginine biosynthesis; L-ornithine and N-acetyl-L-glutamate from L-glutamate and N(2)-acetyl-L-ornithine (cyclic): step 1/1. It functions in the pathway amino-acid biosynthesis; L-arginine biosynthesis; N(2)-acetyl-L-ornithine from L-glutamate: step 1/4. Functionally, catalyzes two activities which are involved in the cyclic version of arginine biosynthesis: the synthesis of N-acetylglutamate from glutamate and acetyl-CoA as the acetyl donor, and of ornithine by transacetylation between N(2)-acetylornithine and glutamate. The protein is Arginine biosynthesis bifunctional protein ArgJ of Prochlorococcus marinus (strain MIT 9313).